The chain runs to 59 residues: UPF0434 protein GOX0764 (59 aa).

It belongs to the UPF0434 family.

The sequence is that of UPF0434 protein GOX0764 from Gluconobacter oxydans (strain 621H) (Gluconobacter suboxydans).